We begin with the raw amino-acid sequence, 148 residues long: Large ribosomal subunit protein bL9 (148 aa).

It belongs to the bacterial ribosomal protein bL9 family.

Binds to the 23S rRNA. The polypeptide is Large ribosomal subunit protein bL9 (Syntrophobacter fumaroxidans (strain DSM 10017 / MPOB)).